A 528-amino-acid chain; its full sequence is Protein spinster homolog 1 (528 aa).

Residues 1–44 (MSGSDTAPFLSQADDTDDGPAPGTPGLPGSMGNPKSEDPAVPDQ) form a disordered region. 12 consecutive transmembrane segments (helical) span residues 50–70 (ITGL…YINL), 98–118 (GLIQ…FGYL), 126–146 (YLMC…SFIP), 160–180 (VGVG…DLFV), 187–207 (MLSV…IAGS), 218–238 (WALR…FLVV), 278–298 (LGFT…PAFL), 323–343 (LIFG…GVEI), 357–377 (LVCA…LACA), 381–401 (IVAT…NWAI), 421–441 (FQIV…IGSI), and 465–485 (MLCA…AIFI). The residue at position 518 (Ser-518) is a Phosphoserine.

The protein belongs to the major facilitator superfamily. Spinster (TC 2.A.1.49) family. Interacts with BCL2 and BCL2L1.

Its subcellular location is the lysosome membrane. It catalyses the reaction a 1-acyl-sn-glycero-3-phosphocholine(out) + H(+)(out) = a 1-acyl-sn-glycero-3-phosphocholine(in) + H(+)(in). It carries out the reaction 1-hexadecanoyl-sn-glycero-3-phosphocholine(out) + H(+)(out) = 1-hexadecanoyl-sn-glycero-3-phosphocholine(in) + H(+)(in). The catalysed reaction is 1-(9Z-octadecenoyl)-sn-glycero-3-phosphocholine(out) + H(+)(out) = 1-(9Z-octadecenoyl)-sn-glycero-3-phosphocholine(in) + H(+)(in). The enzyme catalyses 1-(5Z,8Z,11Z,14Z-eicosatetraenoyl)-sn-glycero-3-phosphocholine(out) + H(+)(out) = 1-(5Z,8Z,11Z,14Z-eicosatetraenoyl)-sn-glycero-3-phosphocholine(in) + H(+)(in). It catalyses the reaction 1-(4Z,7Z,10Z,13Z,16Z,19Z-docosahexaenoyl)-sn-glycero-3-phosphocholine(out) + H(+)(out) = 1-(4Z,7Z,10Z,13Z,16Z,19Z-docosahexaenoyl)-sn-glycero-3-phosphocholine(in) + H(+)(in). It carries out the reaction a 1-acyl-sn-glycero-3-phosphoethanolamine(out) + H(+)(out) = a 1-acyl-sn-glycero-3-phosphoethanolamine(in) + H(+)(in). The catalysed reaction is 1-(9Z-octadecenoyl)-sn-glycero-3-phosphoethanolamine(out) + H(+)(out) = 1-(9Z-octadecenoyl)-sn-glycero-3-phosphoethanolamine(in) + H(+)(in). The enzyme catalyses 1-acyl-sn-glycero-3-phospho-(1'-sn-glycerol)(out) + H(+)(out) = 1-acyl-sn-glycero-3-phospho-(1'-sn-glycerol)(in) + H(+)(in). It catalyses the reaction 1-(9Z-octadecenoyl)-sn-glycero-3-phospho-(1'-sn-glycerol)(out) + H(+)(out) = 1-(9Z-octadecenoyl)-sn-glycero-3-phospho-(1'-sn-glycerol)(in) + H(+)(in). It carries out the reaction a 1-O-(1Z-alkenyl)-sn-glycero-3-phosphocholine(out) + H(+)(out) = a 1-O-(1Z-alkenyl)-sn-glycero-3-phosphocholine(in) + H(+)(in). The catalysed reaction is 1-(1Z-hexadecenyl)-sn-glycero-3-phosphocholine(out) + H(+)(out) = 1-(1Z-hexadecenyl)-sn-glycero-3-phosphocholine(in) + H(+)(in). The enzyme catalyses a 1-O-(1Z-alkenyl)-sn-glycero-3-phosphoethanolamine(out) + H(+)(out) = a 1-O-(1Z-alkenyl)-sn-glycero-3-phosphoethanolamine(in) + H(+)(in). It catalyses the reaction 1-O-(1Z-hexadecenyl)-sn-glycero-3-phosphoethanolamine(out) + H(+)(out) = 1-O-(1Z-hexadecenyl)-sn-glycero-3-phosphoethanolamine(in) + H(+)(in). Functionally, plays a critical role in the phospholipid salvage pathway from lysosomes to the cytosol. Mediates the rate-limiting, proton-dependent, lysosomal efflux of lysophospholipids, which can then be reacylated by acyltransferases in the endoplasmic reticulum to form phospholipids. Selective for zwitterionic headgroups such as lysophosphatidylcholine (LPC) and lysophosphatidylethanolamine (LPE), can also transport lysophosphatidylglycerol (LPG), but not other anionic lysophospholipids, sphingosine, nor sphingomyelin. Transports lysophospholipids with saturated, monounsaturated, and polyunsaturated fatty acids, such as 1-hexadecanoyl-sn-glycero-3-phosphocholine, 1-(9Z-octadecenoyl)-sn-glycero-3-phosphocholine and 1-(4Z,7Z,10Z,13Z,16Z,19Z-docosahexaenoyl)-sn-glycero-3-phosphocholine, respectively. Can also transport lysoplasmalogen (LPC with a fatty alcohol) such as 1-(1Z-hexadecenyl)-sn-glycero-3-phosphocholine. Essential player in lysosomal homeostasis. Crucial for cell survival under conditions of nutrient limitation. May be involved in necrotic or autophagic cell death. This chain is Protein spinster homolog 1 (SPNS1), found in Bos taurus (Bovine).